A 251-amino-acid chain; its full sequence is Triosephosphate isomerase (251 aa).

Residue 8–10 (NWK) participates in substrate binding. The Electrophile role is filled by H97. The active-site Proton acceptor is E170. Substrate-binding positions include G176, S215, and 236–237 (GG).

Belongs to the triosephosphate isomerase family. Homodimer.

It localises to the cytoplasm. The catalysed reaction is D-glyceraldehyde 3-phosphate = dihydroxyacetone phosphate. Its pathway is carbohydrate biosynthesis; gluconeogenesis. It participates in carbohydrate degradation; glycolysis; D-glyceraldehyde 3-phosphate from glycerone phosphate: step 1/1. Its function is as follows. Involved in the gluconeogenesis. Catalyzes stereospecifically the conversion of dihydroxyacetone phosphate (DHAP) to D-glyceraldehyde-3-phosphate (G3P). This Nitratidesulfovibrio vulgaris (strain DSM 19637 / Miyazaki F) (Desulfovibrio vulgaris) protein is Triosephosphate isomerase.